The chain runs to 319 residues: Ribonuclease Z (319 aa).

Residues His62, His64, Asp66, His67, His139, Asp209, and His268 each contribute to the Zn(2+) site. Asp66 serves as the catalytic Proton acceptor.

Belongs to the RNase Z family. As to quaternary structure, homodimer. Requires Zn(2+) as cofactor.

It catalyses the reaction Endonucleolytic cleavage of RNA, removing extra 3' nucleotides from tRNA precursor, generating 3' termini of tRNAs. A 3'-hydroxy group is left at the tRNA terminus and a 5'-phosphoryl group is left at the trailer molecule.. Its function is as follows. Zinc phosphodiesterase, which displays some tRNA 3'-processing endonuclease activity. Probably involved in tRNA maturation, by removing a 3'-trailer from precursor tRNA. In Pseudomonas putida (strain ATCC 47054 / DSM 6125 / CFBP 8728 / NCIMB 11950 / KT2440), this protein is Ribonuclease Z.